A 72-amino-acid polypeptide reads, in one-letter code: Translation initiation factor IF-1 (72 aa).

Residues 1-72 (MSKEDLIEFT…SKGRITFRFK (72 aa)) form the S1-like domain.

The protein belongs to the IF-1 family. As to quaternary structure, component of the 30S ribosomal translation pre-initiation complex which assembles on the 30S ribosome in the order IF-2 and IF-3, IF-1 and N-formylmethionyl-tRNA(fMet); mRNA recruitment can occur at any time during PIC assembly.

The protein resides in the cytoplasm. In terms of biological role, one of the essential components for the initiation of protein synthesis. Stabilizes the binding of IF-2 and IF-3 on the 30S subunit to which N-formylmethionyl-tRNA(fMet) subsequently binds. Helps modulate mRNA selection, yielding the 30S pre-initiation complex (PIC). Upon addition of the 50S ribosomal subunit IF-1, IF-2 and IF-3 are released leaving the mature 70S translation initiation complex. This is Translation initiation factor IF-1 from Gluconobacter oxydans (strain 621H) (Gluconobacter suboxydans).